Consider the following 90-residue polypeptide: Small ribosomal subunit protein uS15 (90 aa).

The protein belongs to the universal ribosomal protein uS15 family. In terms of assembly, part of the 30S ribosomal subunit. Forms a bridge to the 50S subunit in the 70S ribosome, contacting the 23S rRNA.

In terms of biological role, one of the primary rRNA binding proteins, it binds directly to 16S rRNA where it helps nucleate assembly of the platform of the 30S subunit by binding and bridging several RNA helices of the 16S rRNA. Forms an intersubunit bridge (bridge B4) with the 23S rRNA of the 50S subunit in the ribosome. The polypeptide is Small ribosomal subunit protein uS15 (Helicobacter pylori (strain J99 / ATCC 700824) (Campylobacter pylori J99)).